The chain runs to 143 residues: Heat shock protein Hsp-16.41 (143 aa).

The region spanning 35–140 (HNSFNFSDNI…SSRSIPINFV (106 aa)) is the sHSP domain.

It belongs to the small heat shock protein (HSP20) family.

The polypeptide is Heat shock protein Hsp-16.41 (hsp-16.41) (Caenorhabditis elegans).